Here is a 336-residue protein sequence, read N- to C-terminus: Fructose-1,6-bisphosphatase class 1 (336 aa).

The Mg(2+) site is built by Glu90, Asp112, Leu114, and Asp115. Substrate-binding positions include 115–118 (DGSS), Asn211, and Lys277. Glu283 contributes to the Mg(2+) binding site.

The protein belongs to the FBPase class 1 family. Homotetramer. Mg(2+) serves as cofactor.

It localises to the cytoplasm. It carries out the reaction beta-D-fructose 1,6-bisphosphate + H2O = beta-D-fructose 6-phosphate + phosphate. The protein operates within carbohydrate biosynthesis; gluconeogenesis. The sequence is that of Fructose-1,6-bisphosphatase class 1 from Pseudomonas paraeruginosa (strain DSM 24068 / PA7) (Pseudomonas aeruginosa (strain PA7)).